We begin with the raw amino-acid sequence, 126 residues long: Nucleoside diphosphate kinase B (126 aa).

Positions 6, 37, 68, 79, and 89 each coordinate ATP. Catalysis depends on His92, which acts as the Pros-phosphohistidine intermediate.

The protein belongs to the NDK family. Requires Mg(2+) as cofactor.

The protein resides in the cytoplasm. The protein localises to the nucleus. It localises to the cell projection. It is found in the lamellipodium. Its subcellular location is the ruffle. The catalysed reaction is a 2'-deoxyribonucleoside 5'-diphosphate + ATP = a 2'-deoxyribonucleoside 5'-triphosphate + ADP. The enzyme catalyses a ribonucleoside 5'-diphosphate + ATP = a ribonucleoside 5'-triphosphate + ADP. In terms of biological role, major role in the synthesis of nucleoside triphosphates other than ATP. This Macruronus magellanicus (Patagonian grenadier) protein is Nucleoside diphosphate kinase B (nme2).